Consider the following 509-residue polypeptide: Zinc finger protein CKR1 (509 aa).

Residues 1–61 enclose the KRAB domain; that stretch reads MEPYVLLDPR…GSEEPQTHPP (61 aa). 2 stretches are compositionally biased toward basic and acidic residues: residues 41–50 and 98–112; these read EDAVGLKEDA and PKRD…RDRP. Residues 41–114 are disordered; sequence EDAVGLKEDA…PSRVRDRPFG (74 aa). C2H2-type zinc fingers lie at residues 113 to 135, 141 to 163, 169 to 191, 197 to 219, 225 to 247, 279 to 303, 303 to 325, 331 to 353, 359 to 383, 387 to 409, and 415 to 437; these read FGCP…RRVH, YSCP…RRTH, HKCQ…SRGH, HRCG…RRVH, YECP…RRSH, QRCA…ERSH, FPCG…GKTH, YKCG…GHAA, and FTCG…RRVH. The interval 428–479 is disordered; sequence SHLTKHRRSHGPKAPLLPVQGRGEAGEPLRASPLSSGAEQRDGRRAQRGGVE.

This sequence belongs to the krueppel C2H2-type zinc-finger protein family.

Its subcellular location is the nucleus. In Gallus gallus (Chicken), this protein is Zinc finger protein CKR1.